The primary structure comprises 478 residues: Septin-4 (478 aa).

Residues 1–115 are disordered; sequence MDRSLGWQGN…RSPWGKLDPY (115 aa). Residues 13–26 are compositionally biased toward basic and acidic residues; it reads PEDRTEAGIKRFLE. Low complexity predominate over residues 95–108; the sequence is APAPLSPSARPRSP. S117 and S118 each carry phosphoserine. The Septin-type G domain occupies 141-414; it reads KGFDFTLMVA…ENYRAQCIQS (274 aa). Residues 151–158 form a G1 motif region; that stretch reads GESGLGKS. GTP is bound by residues 151 to 158 and T185; that span reads GESGLGKS. The G3 motif stretch occupies residues 208 to 211; it reads DTPG. The segment at 289–292 is G4 motif; it reads AKAD. 290 to 298 lines the GTP pocket; the sequence is KADTLTPPE. A Phosphoserine modification is found at S325. Positions 348 and 363 each coordinate GTP. Residues 428 to 448 are disordered; sequence LTRESGTDFPIPAVPPGTDPE. S432 carries the post-translational modification Phosphoserine. At T434 the chain carries Phosphothreonine. Residues 447-478 adopt a coiled-coil conformation; the sequence is PETEKLIREKDEELRRMQEMLHKIQKQMKENY.

Belongs to the TRAFAC class TrmE-Era-EngA-EngB-Septin-like GTPase superfamily. Septin GTPase family. In terms of assembly, septins polymerize into heterooligomeric protein complexes that form filaments, and can associate with cellular membranes, actin filaments and microtubules. GTPase activity is required for filament formation. Interacts with SEPTIN8. In a mesenchymal cell line, interacts with SEPTIN9 isoform 2 variants HNA Trp-106 and Phe-111, but not the wild type SEPTIN9. Component of a septin core octameric complex consisting of SEPTIN12, SEPTIN7, SEPTIN6 and SEPTIN2 or SEPTIN4 in the order 12-7-6-2-2-6-7-12 or 12-7-6-4-4-6-7-12. Interacts with SEPTIN14 (via C-terminus). Interacts with DYRK1A. Interacts with SLC6A3/DAT and SNCA/alpha-synuclein. Interacts with STX1A; in the striatum. Interacts with XIAP (via BIR3 domain) following the induction of apoptosis. Interacts with AREL1 (via HECT domain); in the cytoplasm following induction of apoptosis. Part of a complex composed of SEPTIN4 isoform ARTS, XIAP and BCL2, within the complex interacts with both BCL2 (via BH3 domain) and XIAP, ARTS acts as a scaffold protein and stabilizes the complex. Interacts with XIAP (via BIR3 domain) following the induction of apoptosis. In terms of processing, phosphorylated by DYRK1A. Post-translationally, ubiquitinated by AREL1. In terms of tissue distribution, widely expressed in adult and fetal tissues with highest expression in adult brain (at protein level), heart, liver and adrenal gland and fetal heart, kidney, liver and lung. Expressed in presynaptic terminals of dopaminergic neurons projecting from the substantia nigra pars compacta to the striatum (at protein level). Expressed in axonal varicosities in dopaminergic nerve terminals (at protein level). Expressed in the putamen and in the adjacent cerebral cortex (at protein level). Expressed in colonic crypts (at protein level). Also expressed in colorectal cancers and malignant melanomas. Expressed in platelets. Highly expressed in the brain and heart.

Its subcellular location is the cytoplasm. The protein resides in the cell projection. It localises to the cilium. It is found in the flagellum. The protein localises to the cytoplasmic vesicle. Its subcellular location is the secretory vesicle. The protein resides in the axon. It localises to the dendrite. It is found in the perikaryon. The protein localises to the synapse. Its subcellular location is the mitochondrion. The protein resides in the nucleus. Functionally, filament-forming cytoskeletal GTPase. Pro-apoptotic protein involved in LGR5-positive intestinal stem cell and Paneth cell expansion in the intestines, via its interaction with XIAP. May also play a role in the regulation of cell fate in the intestine. Positive regulator of apoptosis involved in hematopoietic stem cell homeostasis; via its interaction with XIAP. Negative regulator of repair and hair follicle regeneration in response to injury, due to inhibition of hair follicle stem cell proliferation, potentially via its interaction with XIAP. Plays an important role in male fertility and sperm motility. During spermiogenesis, essential for the establishment of the annulus (a fibrous ring structure connecting the midpiece and the principal piece of the sperm flagellum) which is a requisite for the structural and mechanical integrity of the sperm. Involved in the migration of cortical neurons and the formation of neuron leading processes during embryonic development. Required for dopaminergic metabolism in presynaptic autoreceptors; potentially via activity as a presynaptic scaffold protein. Its function is as follows. Required for the induction of cell death mediated by TGF-beta and possibly by other apoptotic stimuli. Induces apoptosis through binding and inhibition of XIAP resulting in significant reduction in XIAP levels, leading to caspase activation and cell death. Mediates the interaction between BCL2 and XIAP, thereby positively regulating the ubiquitination and degradation of BCL2 and promoting apoptosis. The polypeptide is Septin-4 (Homo sapiens (Human)).